Reading from the N-terminus, the 339-residue chain is Transaldolase (339 aa).

Catalysis depends on Lys-135, which acts as the Schiff-base intermediate with substrate.

It belongs to the transaldolase family. Type 1 subfamily. Homodimer.

It localises to the cytoplasm. It catalyses the reaction D-sedoheptulose 7-phosphate + D-glyceraldehyde 3-phosphate = D-erythrose 4-phosphate + beta-D-fructose 6-phosphate. Its pathway is carbohydrate degradation; pentose phosphate pathway; D-glyceraldehyde 3-phosphate and beta-D-fructose 6-phosphate from D-ribose 5-phosphate and D-xylulose 5-phosphate (non-oxidative stage): step 2/3. Functionally, transaldolase is important for the balance of metabolites in the pentose-phosphate pathway. This chain is Transaldolase, found in Prochlorococcus marinus (strain MIT 9211).